The following is a 615-amino-acid chain: Nuclear cap-binding protein subunit 3 (615 aa).

Residue lysine 12 forms a Glycyl lysine isopeptide (Lys-Gly) (interchain with G-Cter in SUMO2) linkage. Residues 15–27 (APAGPALGLPSPE) are compositionally biased toward low complexity. The disordered stretch occupies residues 15 to 43 (APAGPALGLPSPEVESGLERGEPEPMEVE). Serine 25 is modified (phosphoserine). Lysine 70 is covalently cross-linked (Glycyl lysine isopeptide (Lys-Gly) (interchain with G-Cter in SUMO2)). The residue at position 73 (serine 73) is a Phosphoserine. Residues 126–187 (ETIYICGVDE…MSSLPAQDKM (62 aa)) form an RNA recognition motif (RRM) domain region. Residues 155–158 (WLDD) carry the WLDD motif; essential for 7-methylguanosine-containing mRNA cap binding motif. Disordered regions lie at residues 182-233 (PAQD…LDTL) and 332-400 (HSGL…MDYD). Over residues 185-208 (DKMRSRDASEDKSSEKNKKDKQED) the composition is skewed to basic and acidic residues. A Glycyl lysine isopeptide (Lys-Gly) (interchain with G-Cter in SUMO2) cross-link involves residue lysine 186. Residues serine 209 and serine 210 each carry the phosphoserine modification. Acidic residues-rich tracts occupy residues 209 to 230 (SSDD…DVEL) and 341 to 360 (EPIE…DMDA). Over residues 361-383 (DDRVVVEYHEELPGLKQPRERSL) the composition is skewed to basic and acidic residues. The residue at position 408 (threonine 408) is a Phosphothreonine. Serine 410 is modified (phosphoserine). Disordered stretches follow at residues 430–454 (SIRN…NKLP) and 467–615 (EKRQ…EAES). Over residues 506–516 (VRREPSSDVHS) the composition is skewed to basic and acidic residues. Lysine 536 participates in a covalent cross-link: Glycyl lysine isopeptide (Lys-Gly) (interchain with G-Cter in SUMO2). 2 stretches are compositionally biased toward basic and acidic residues: residues 549–564 (KTKE…RASG) and 580–593 (IKEK…KSRL). Serine 563 carries the phosphoserine modification. Residues 606–615 (ESSSGSEAES) are compositionally biased toward low complexity. Position 615 is a phosphoserine (serine 615).

Belongs to the NCBP3 family. Component of an alternative cap-binding complex (CBC) composed of NCBP1/CBP80 and NCBP3. Interacts with SRRT, KPNA3, THOC5 and EIF4A3.

It is found in the nucleus. The protein localises to the cytoplasm. Associates with NCBP1/CBP80 to form an alternative cap-binding complex (CBC) which plays a key role in mRNA export. NCBP3 serves as adapter protein linking the capped RNAs (m7GpppG-capped RNA) to NCBP1/CBP80. Unlike the conventional CBC with NCBP2 which binds both small nuclear RNA (snRNA) and messenger (mRNA) and is involved in their export from the nucleus, the alternative CBC with NCBP3 does not bind snRNA and associates only with mRNA thereby playing a role in only mRNA export. The alternative CBC is particularly important in cellular stress situations such as virus infections and the NCBP3 activity is critical to inhibit virus growth. The chain is Nuclear cap-binding protein subunit 3 from Mus musculus (Mouse).